Here is a 790-residue protein sequence, read N- to C-terminus: Nuclear cap-binding protein subunit 1 (790 aa).

The interval 1–26 (MSRRRHSYENDGGQPHKRRKTSDANE) is disordered. Positions 3 to 20 (RRRHSYENDGGQPHKRRK) match the Nuclear localization signal motif. S7 bears the Phosphoserine mark. T21 carries the phosphothreonine modification. Phosphoserine is present on residues S22 and S201. Residues 28 to 240 (EDHLESLICK…CLWAQIQKLK (213 aa)) enclose the MIF4G domain. Position 204 is an N6-acetyllysine (K204). Residues 643-713 (STIRKMNKHV…SEQKNLFLVI (71 aa)) adopt a coiled-coil conformation. K684 participates in a covalent cross-link: Glycyl lysine isopeptide (Lys-Gly) (interchain with G-Cter in SUMO2). K698 carries the N6-acetyllysine modification.

It belongs to the NCBP1 family. Component of the nuclear cap-binding complex (CBC), a heterodimer composed of NCBP1/CBP80 and NCBP2/CBP20 that interacts with m7GpppG-capped RNA. Found in a U snRNA export complex containing PHAX/RNUXA, NCBP1/CBP80, NCBP2/CBP20, RAN, XPO1 and m7G-capped RNA. Identified in a IGF2BP1-dependent mRNP granule complex containing untranslated mRNAs. Interacts with PHAX/RNUXA, SRRT/ARS2, EIF4G2, IGF2BP1, HNRNPF, HNRNPH1, KIAA0427/CTIF, PARN, DROSHA, UPF1 and ALYREF/THOC4. May interact with EIF4G1; the interaction is however controversial since it is reported by, and, but is not observed by. The large PER complex involved in the repression of transcriptional termination is composed of at least PER2, CDK9, DDX5, DHX9, NCBP1/CBP80 and POLR2A. Component of an alternative nuclear cap-binding complex (CBC) composed of NCBP1/CBP80 and NCBP3. Interacts with METTL3. Interacts with ZFC3H1 in a RNase-insensitive manner. Interacts with MTREX. Interacts with TASOR. Interacts with DHX34; the interaction is RNA-dependent. Interacts with KPNA3. Dephosphorylated at Thr-21 by the PNUTS-PP1 complex during RNA polymerase II transcription pause-release.

It localises to the nucleus. The protein localises to the cytoplasm. Functionally, component of the cap-binding complex (CBC), which binds cotranscriptionally to the 5'-cap of pre-mRNAs and is involved in various processes such as pre-mRNA splicing, translation regulation, nonsense-mediated mRNA decay, RNA-mediated gene silencing (RNAi) by microRNAs (miRNAs) and mRNA export. The CBC complex is involved in mRNA export from the nucleus via its interaction with ALYREF/THOC4/ALY, leading to the recruitment of the mRNA export machinery to the 5'-end of mRNA and to mRNA export in a 5' to 3' direction through the nuclear pore. The CBC complex is also involved in mediating U snRNA and intronless mRNAs export from the nucleus. The CBC complex is essential for a pioneer round of mRNA translation, before steady state translation when the CBC complex is replaced by cytoplasmic cap-binding protein eIF4E. The pioneer round of mRNA translation mediated by the CBC complex plays a central role in nonsense-mediated mRNA decay (NMD), NMD only taking place in mRNAs bound to the CBC complex, but not on eIF4E-bound mRNAs. The CBC complex enhances NMD in mRNAs containing at least one exon-junction complex (EJC) via its interaction with UPF1, promoting the interaction between UPF1 and UPF2. The CBC complex is also involved in 'failsafe' NMD, which is independent of the EJC complex, while it does not participate in Staufen-mediated mRNA decay (SMD). During cell proliferation, the CBC complex is also involved in microRNAs (miRNAs) biogenesis via its interaction with SRRT/ARS2 and is required for miRNA-mediated RNA interference. The CBC complex also acts as a negative regulator of PARN, thereby acting as an inhibitor of mRNA deadenylation. In the CBC complex, NCBP1/CBP80 does not bind directly capped RNAs (m7GpppG-capped RNA) but is required to stabilize the movement of the N-terminal loop of NCBP2/CBP20 and lock the CBC into a high affinity cap-binding state with the cap structure. Associates with NCBP3 to form an alternative cap-binding complex (CBC) which plays a key role in mRNA export and is particularly important in cellular stress situations such as virus infections. The conventional CBC with NCBP2 binds both small nuclear RNA (snRNA) and messenger (mRNA) and is involved in their export from the nucleus whereas the alternative CBC with NCBP3 does not bind snRNA and associates only with mRNA thereby playing a role only in mRNA export. NCBP1/CBP80 is required for cell growth and viability. This chain is Nuclear cap-binding protein subunit 1 (Ncbp1), found in Rattus norvegicus (Rat).